A 255-amino-acid polypeptide reads, in one-letter code: Imidazole glycerol phosphate synthase subunit HisF (255 aa).

Residues aspartate 12 and aspartate 131 contribute to the active site.

Belongs to the HisA/HisF family. Heterodimer of HisH and HisF.

It is found in the cytoplasm. The catalysed reaction is 5-[(5-phospho-1-deoxy-D-ribulos-1-ylimino)methylamino]-1-(5-phospho-beta-D-ribosyl)imidazole-4-carboxamide + L-glutamine = D-erythro-1-(imidazol-4-yl)glycerol 3-phosphate + 5-amino-1-(5-phospho-beta-D-ribosyl)imidazole-4-carboxamide + L-glutamate + H(+). It functions in the pathway amino-acid biosynthesis; L-histidine biosynthesis; L-histidine from 5-phospho-alpha-D-ribose 1-diphosphate: step 5/9. IGPS catalyzes the conversion of PRFAR and glutamine to IGP, AICAR and glutamate. The HisF subunit catalyzes the cyclization activity that produces IGP and AICAR from PRFAR using the ammonia provided by the HisH subunit. This is Imidazole glycerol phosphate synthase subunit HisF from Neisseria meningitidis serogroup C / serotype 2a (strain ATCC 700532 / DSM 15464 / FAM18).